Reading from the N-terminus, the 481-residue chain is MVIFEKTRGKNSPSVMPSKKGDVSNIPTDMLRTKKPILPEQAELDVVRHYTQLSRKNFCIDTNFYPLGSCTMKYNPRAAHKYASLAGFLERHPYASAQSVQGTLECLYDLQNLIKELTGMTGVSLAPMAGAQGEFAGVAMIKAYHHKRSDFERDEIIVPDAAHGTNPATAKVCGLKVIEIPTKKDGDIDIEALDKVLGPKTAGIMLTNPSTVGVFERNIAVIAKKVHEAGGLLYYDGANLNAIMGKARPGDMGFDVLHMNLHKTFATPHGGGGPGAGPVAVNDKLKEFLPVPMVGKKDDKFVWLEEKDVSNTIGRLSAFNGNIGVLIRAYIYGAMLGGNGLTEASEIATLNANYMMARLKEEGFTIAYPDRRASHEFIVTLKPEFLNYGVTATDFAKCLIDKGVHAPTMYFPLLVPECLLIEPTETENVDSMEKFIQAMVEIRDIAKKDPQYLKGAPYNLPARRLDDVKAAKELDIVWQPK.

The disordered stretch occupies residues 1–26 (MVIFEKTRGKNSPSVMPSKKGDVSNI). Position 263 is an N6-(pyridoxal phosphate)lysine (Lys-263).

The protein belongs to the GcvP family. C-terminal subunit subfamily. As to quaternary structure, the glycine cleavage system is composed of four proteins: P, T, L and H. In this organism, the P 'protein' is a heterodimer of two subunits. It depends on pyridoxal 5'-phosphate as a cofactor.

It carries out the reaction N(6)-[(R)-lipoyl]-L-lysyl-[glycine-cleavage complex H protein] + glycine + H(+) = N(6)-[(R)-S(8)-aminomethyldihydrolipoyl]-L-lysyl-[glycine-cleavage complex H protein] + CO2. The glycine cleavage system catalyzes the degradation of glycine. The P protein binds the alpha-amino group of glycine through its pyridoxal phosphate cofactor; CO(2) is released and the remaining methylamine moiety is then transferred to the lipoamide cofactor of the H protein. The sequence is that of Probable glycine dehydrogenase (decarboxylating) subunit 2 from Francisella tularensis subsp. mediasiatica (strain FSC147).